The chain runs to 432 residues: DNA damage-binding protein 2 (432 aa).

A disordered region spans residues 1-31 (MAPKKCPETQKSPDVAVLLRSKSRRGPQELE). N6-acetyllysine occurs at positions 35 and 77. 2 required for interaction with DDB1 regions span residues 68 to 79 (SIVRDLYQHKLG) and 87 to 98 (QQGLQKSFLHSL). WD repeat units follow at residues 116-151 (SLAW…IFLK), 159-194 (ITGL…LRVY), 203-238 (WFCS…LWNL), 244-287 (KVAH…SLPH), and 290-329 (PVNA…LISH). A DWD box motif is present at residues 256-274 (WLLATASIDQTVKIWDLRQ). The tract at residues 334–336 (FQH) is photolesion recognition. 2 WD repeats span residues 343–386 (TWHS…MCQL) and 396–420 (SLNE…IWSQ).

It belongs to the WD repeat DDB2/WDR76 family. As to quaternary structure, component of the UV-DDB complex which includes DDB1 and DDB2. The UV-DDB complex interacts with monoubiquitinated histone H2A and binds to XPC via the DDB2 subunit. Component of the DCX (DDB1-CUL4-X-box) E3 ubiquitin-protein ligase complex DDB1-CUL4-ROC1 (also known as CUL4-DDB-ROC1 and CUL4-DDB-RBX1), which includes CUL4A or CUL4B, DDB1, DDB2 and RBX1. DDB2 may function as the substrate recognition module within this complex. The DDB1-CUL4-ROC1 complex may associate with the COP9 signalosome, and this inhibits the E3 ubiquitin-protein ligase activity of the complex. A large number of other DCX complexes may also exist in which an alternate substrate targeting subunit replaces DDB2. These targeting subunits are generally known as DCAF (DDB1- and CUL4-associated factor) or CDW (CUL4-DDB1-associated WD40-repeat) proteins. Post-translationally, phosphorylation by ABL1 negatively regulate UV-DDB activity. In terms of processing, ubiquitinated by CUL4A in response to UV irradiation. Ubiquitination appears to both impair DNA-binding and promotes ubiquitin-dependent proteolysis. Degradation of DDB2 at sites of DNA damage may be a prerequisite for their recognition by XPC and subsequent repair. CUL4A-mediated degradation appears to be promoted by ABL1. Ubiquitinated, leading to proteasomal degradation, and deubiquitinated by USP24. Deubiquitinated by USP44; leading to its stabilization on DNA lesions. Post-translationally, acetylated. Deacetylation by SIRT6 in response to UV stress facilitates nucleotide excision repair pathway (the NER pathway) transduction. Expressed in bone marrow, liver, lung, muscle, pancreas and spleen.

Its subcellular location is the nucleus. The protein resides in the chromosome. It participates in protein modification; protein ubiquitination. Protein, which is both involved in DNA repair and protein ubiquitination, as part of the UV-DDB complex and DCX (DDB1-CUL4-X-box) complexes, respectively. Core component of the UV-DDB complex (UV-damaged DNA-binding protein complex), a complex that recognizes UV-induced DNA damage and recruit proteins of the nucleotide excision repair pathway (the NER pathway) to initiate DNA repair. The UV-DDB complex preferentially binds to cyclobutane pyrimidine dimers (CPD), 6-4 photoproducts (6-4 PP), apurinic sites and short mismatches. Also functions as the substrate recognition module for the DCX (DDB2-CUL4-X-box) E3 ubiquitin-protein ligase complex DDB2-CUL4-ROC1 (also known as CUL4-DDB-ROC1 and CUL4-DDB-RBX1). The DDB2-CUL4-ROC1 complex may ubiquitinate histone H2A, histone H3 and histone H4 at sites of UV-induced DNA damage. The ubiquitination of histones may facilitate their removal from the nucleosome and promote subsequent DNA repair. The DDB2-CUL4-ROC1 complex also ubiquitinates XPC, which may enhance DNA-binding by XPC and promote NER. The DDB2-CUL4-ROC1 complex also ubiquitinates KAT7/HBO1 in response to DNA damage, leading to its degradation: recognizes KAT7/HBO1 following phosphorylation by ATR. The chain is DNA damage-binding protein 2 (Ddb2) from Mus musculus (Mouse).